A 1502-amino-acid chain; its full sequence is Heme-responsive zinc finger transcription factor HAP1 (1502 aa).

Polar residues predominate over residues 1–50 (MSNTPYNSSVPSIASMTQSSVSRSPNMHTATTPGANTSSNSPPLHMSSDS). The tract at residues 1-56 (MSNTPYNSSVPSIASMTQSSVSRSPNMHTATTPGANTSSNSPPLHMSSDSSKIKRK) is disordered. 6 residues coordinate Zn(2+): C64, C67, C74, C81, C84, and C93. Positions 64–93 (CTICRKRKVKCDKLRPHCQQCTKTGVAHLC) form a DNA-binding region, zn(2)-C6 fungal-type. Positions 105 to 134 (EKELLKDNELKKLRERVKSLEKTLSKVHSS) form a coiled coil. The segment at 126-208 (KTLSKVHSSP…ANSSSLSISN (83 aa)) is disordered. Over residues 130–142 (KVHSSPSSNSLKS) the composition is skewed to low complexity. Polar residues-rich tracts occupy residues 143 to 152 (YNTPESSNLF) and 160 to 176 (TLVN…SHMH). The span at 177 to 208 (QQQQQQQQQEQQQDFSRSANANANSSSLSISN) shows a compositional bias: low complexity. Residues 244 to 444 (KGDPYLKLLW…NTIPHHQPQS (201 aa)) are heme-responsive; required for HMC formation. HRM repeat units follow at residues 280 to 285 (KCPINH), 299 to 304 (KCPVDH), 323 to 328 (KCPVDH), 347 to 352 (RCPVDH), 389 to 394 (KCPVDH), and 415 to 420 (RCPIDH). Polar residues-rich tracts occupy residues 432 to 447 (STHN…SGSH) and 706 to 734 (QLNA…NPTL). Disordered stretches follow at residues 432 to 458 (STHN…SRKH) and 706 to 767 (QLNA…KENQ). Low complexity predominate over residues 735-759 (NNNMSAATTNSSSRSGSADSRSGSN). The HRM 7 repeat unit spans residues 1192–1197 (KCPVYQ). The disordered stretch occupies residues 1384 to 1411 (TANTDTSANGSALSTLTSPQGSDLASNS). Residues 1388 to 1411 (DTSANGSALSTLTSPQGSDLASNS) are compositionally biased toward polar residues.

Binds DNA as a homodimer. Interacts with SRO9 and YDJ1. In the absence of heme, binds to at least four cellular proteins, including YDJ1 and SRO9, forming a high-molecular-weight complex (HMC) which results in repression of its activity and dictates its DNA-binding specificity.

It is found in the nucleus. Its function is as follows. Regulation of oxygen dependent gene expression. It modulates the expression of Iso-1 (CYP1) and Iso-2 (CYP3) cytochrome c. In response to heme, promotes transcription of genes encoding functions required for respiration, controlling oxidative damage and repression of anaerobic genes. Binds to the sequence 5'-CGGNNNTNNCGG-3'. Is non-functional in terms of iso-1 cytochrome c expression in strain S288c and its derivatives. The protein is Heme-responsive zinc finger transcription factor HAP1 (HAP1) of Saccharomyces cerevisiae (strain ATCC 204508 / S288c) (Baker's yeast).